A 360-amino-acid chain; its full sequence is Heme A synthase (360 aa).

The next 9 membrane-spanning stretches (helical) occupy residues tryptophan 29–leucine 49, phenylalanine 111–glycine 131, leucine 139–valine 159, leucine 175–glycine 195, leucine 210–alanine 230, proline 242–isoleucine 262, valine 269–leucine 289, alanine 309–valine 329, and proline 330–valine 350. Histidine 276 provides a ligand contact to heme. Histidine 337 is a heme binding site.

It belongs to the COX15/CtaA family. Type 2 subfamily. Interacts with CtaB. It depends on heme b as a cofactor.

The protein localises to the cell membrane. It carries out the reaction Fe(II)-heme o + 2 A + H2O = Fe(II)-heme a + 2 AH2. It participates in porphyrin-containing compound metabolism; heme A biosynthesis; heme A from heme O: step 1/1. Functionally, catalyzes the conversion of heme O to heme A by two successive hydroxylations of the methyl group at C8. The first hydroxylation forms heme I, the second hydroxylation results in an unstable dihydroxymethyl group, which spontaneously dehydrates, resulting in the formyl group of heme A. This Methylobacterium nodulans (strain LMG 21967 / CNCM I-2342 / ORS 2060) protein is Heme A synthase.